The following is a 110-amino-acid chain: Putative caspase recruitment domain-containing protein 17P (110 aa).

The CARD domain maps to 1-91 (MADKVLKEKR…HLAGTLGLSA (91 aa)).

Interacts with pro-CASP1. As to expression, ubiquitous.

It localises to the cytoplasm. Its function is as follows. Regulator of procaspase-1/CASP1 activation implicated in the regulation of the proteolytic maturation of pro-IL-1beta/IL1B and its release during inflammation. Inhibits the release of IL1B in response to LPS in monocytes. However, unlike CASP1, do not induce NF-kappa-B activation. The chain is Putative caspase recruitment domain-containing protein 17P (CARD17P) from Homo sapiens (Human).